We begin with the raw amino-acid sequence, 227 residues long: UPF0173 metal-dependent hydrolase BC_4613 (227 aa).

The protein belongs to the UPF0173 family.

The polypeptide is UPF0173 metal-dependent hydrolase BC_4613 (Bacillus cereus (strain ATCC 14579 / DSM 31 / CCUG 7414 / JCM 2152 / NBRC 15305 / NCIMB 9373 / NCTC 2599 / NRRL B-3711)).